A 464-amino-acid chain; its full sequence is tRNA modification GTPase MnmE (464 aa).

(6S)-5-formyl-5,6,7,8-tetrahydrofolate contacts are provided by arginine 27, glutamate 90, and lysine 129. Positions 222–384 constitute a TrmE-type G domain; it reads GIALVLAGSV…LYDKIRSLTC (163 aa). Residues 232–237, 251–257, and 276–279 each bind GTP; these read NVGKSS, SSYAGTT, and DTAG. Mg(2+) is bound by residues serine 236 and threonine 257. Lysine 464 contributes to the (6S)-5-formyl-5,6,7,8-tetrahydrofolate binding site.

It belongs to the TRAFAC class TrmE-Era-EngA-EngB-Septin-like GTPase superfamily. TrmE GTPase family. In terms of assembly, homodimer. Heterotetramer of two MnmE and two MnmG subunits. K(+) serves as cofactor.

The protein resides in the cytoplasm. Its function is as follows. Exhibits a very high intrinsic GTPase hydrolysis rate. Involved in the addition of a carboxymethylaminomethyl (cmnm) group at the wobble position (U34) of certain tRNAs, forming tRNA-cmnm(5)s(2)U34. In Borrelia turicatae (strain 91E135), this protein is tRNA modification GTPase MnmE.